The chain runs to 290 residues: UDP-N-acetylenolpyruvoylglucosamine reductase (290 aa).

The 168-residue stretch at G20 to S187 folds into the FAD-binding PCMH-type domain. Residue R167 is part of the active site.

The protein belongs to the MurB family. It depends on FAD as a cofactor.

Its subcellular location is the cytoplasm. It catalyses the reaction UDP-N-acetyl-alpha-D-muramate + NADP(+) = UDP-N-acetyl-3-O-(1-carboxyvinyl)-alpha-D-glucosamine + NADPH + H(+). It participates in cell wall biogenesis; peptidoglycan biosynthesis. Its function is as follows. Cell wall formation. The protein is UDP-N-acetylenolpyruvoylglucosamine reductase of Deinococcus radiodurans (strain ATCC 13939 / DSM 20539 / JCM 16871 / CCUG 27074 / LMG 4051 / NBRC 15346 / NCIMB 9279 / VKM B-1422 / R1).